The primary structure comprises 464 residues: Maturase K (464 aa).

This sequence belongs to the intron maturase 2 family. MatK subfamily.

The protein localises to the plastid. Its subcellular location is the chloroplast. Usually encoded in the trnK tRNA gene intron. Probably assists in splicing its own and other chloroplast group II introns. This chain is Maturase K, found in Castanea crenata (Japanese chestnut).